A 359-amino-acid polypeptide reads, in one-letter code: Phosphate acyltransferase (359 aa).

Belongs to the PlsX family. In terms of assembly, homodimer. Probably interacts with PlsY.

It is found in the cytoplasm. The enzyme catalyses a fatty acyl-[ACP] + phosphate = an acyl phosphate + holo-[ACP]. Its pathway is lipid metabolism; phospholipid metabolism. Its function is as follows. Catalyzes the reversible formation of acyl-phosphate (acyl-PO(4)) from acyl-[acyl-carrier-protein] (acyl-ACP). This enzyme utilizes acyl-ACP as fatty acyl donor, but not acyl-CoA. This is Phosphate acyltransferase from Salmonella agona (strain SL483).